The primary structure comprises 308 residues: Glutaminase (308 aa).

Substrate contacts are provided by serine 65, asparagine 116, glutamate 161, asparagine 168, tyrosine 192, tyrosine 244, and valine 262.

It belongs to the glutaminase family. Homotetramer.

It carries out the reaction L-glutamine + H2O = L-glutamate + NH4(+). The chain is Glutaminase from Geobacillus kaustophilus (strain HTA426).